Consider the following 163-residue polypeptide: Nucleotide-binding protein LA_3406 (163 aa).

Belongs to the YajQ family.

Nucleotide-binding protein. The polypeptide is Nucleotide-binding protein LA_3406 (Leptospira interrogans serogroup Icterohaemorrhagiae serovar Lai (strain 56601)).